The sequence spans 271 residues: Phosphatidylglycerol--prolipoprotein diacylglyceryl transferase (271 aa).

A run of 7 helical transmembrane segments spans residues 25 to 45 (WYGI…KFFV), 60 to 80 (YFIW…ILIY), 103 to 123 (FVGI…IATL), 134 to 154 (WIFL…GRIG), 181 to 201 (PSQL…VYLA), 209 to 229 (GELI…CEFY), and 235 to 255 (GIGF…IMFI). Arg-152 is an a 1,2-diacyl-sn-glycero-3-phospho-(1'-sn-glycerol) binding site.

This sequence belongs to the Lgt family.

It localises to the cell inner membrane. It carries out the reaction L-cysteinyl-[prolipoprotein] + a 1,2-diacyl-sn-glycero-3-phospho-(1'-sn-glycerol) = an S-1,2-diacyl-sn-glyceryl-L-cysteinyl-[prolipoprotein] + sn-glycerol 1-phosphate + H(+). Its pathway is protein modification; lipoprotein biosynthesis (diacylglyceryl transfer). In terms of biological role, catalyzes the transfer of the diacylglyceryl group from phosphatidylglycerol to the sulfhydryl group of the N-terminal cysteine of a prolipoprotein, the first step in the formation of mature lipoproteins. The chain is Phosphatidylglycerol--prolipoprotein diacylglyceryl transferase from Campylobacter jejuni subsp. jejuni serotype O:23/36 (strain 81-176).